Consider the following 164-residue polypeptide: NADH-quinone oxidoreductase subunit I 1 (164 aa).

4Fe-4S ferredoxin-type domains follow at residues 54-84 (LRRY…IEAG) and 95-124 (VRYD…EGPN). [4Fe-4S] cluster is bound by residues C64, C67, C70, C74, C104, C107, C110, and C114.

The protein belongs to the complex I 23 kDa subunit family. In terms of assembly, NDH-1 is composed of 14 different subunits. Subunits NuoA, H, J, K, L, M, N constitute the membrane sector of the complex. Requires [4Fe-4S] cluster as cofactor.

Its subcellular location is the cell inner membrane. It carries out the reaction a quinone + NADH + 5 H(+)(in) = a quinol + NAD(+) + 4 H(+)(out). In terms of biological role, NDH-1 shuttles electrons from NADH, via FMN and iron-sulfur (Fe-S) centers, to quinones in the respiratory chain. The immediate electron acceptor for the enzyme in this species is believed to be ubiquinone. Couples the redox reaction to proton translocation (for every two electrons transferred, four hydrogen ions are translocated across the cytoplasmic membrane), and thus conserves the redox energy in a proton gradient. This is NADH-quinone oxidoreductase subunit I 1 from Rhizobium meliloti (strain 1021) (Ensifer meliloti).